The sequence spans 120 residues: PYEKIGAELVKEVAKKTDDVAGDGTTTATVLAQALVREGLRNVAAGANPLGLKRGIEKAVEKVSSTLLASAKEVETKEQIAATAGISAGDQTIGDLIAEAMDKVGNEGVITVEESNTFGL.

Position 23-27 (23-27) interacts with ATP; that stretch reads DGTTT.

It belongs to the chaperonin (HSP60) family. As to quaternary structure, forms a cylinder of 14 subunits composed of two heptameric rings stacked back-to-back. Interacts with the co-chaperonin GroES.

The protein localises to the cytoplasm. It catalyses the reaction ATP + H2O + a folded polypeptide = ADP + phosphate + an unfolded polypeptide.. Together with its co-chaperonin GroES, plays an essential role in assisting protein folding. The GroEL-GroES system forms a nano-cage that allows encapsulation of the non-native substrate proteins and provides a physical environment optimized to promote and accelerate protein folding. In Mycolicibacterium fallax (Mycobacterium fallax), this protein is Chaperonin GroEL.